The chain runs to 374 residues: Chaperone protein DnaJ (374 aa).

Residues 5–70 (DYYEVLGISR…SKRAAYDQFG (66 aa)) enclose the J domain. The CR-type zinc-finger motif lies at 129–207 (GKTVKINIPG…CHGQGRVRQE (79 aa)). Positions 142, 145, 159, 162, 181, 184, 195, and 198 each coordinate Zn(2+). 4 CXXCXGXG motif repeats span residues 142 to 149 (CEACDGSG), 159 to 166 (CGTCQGMG), 181 to 188 (CPTCRGSG), and 195 to 202 (CKSCHGQG). A disordered region spans residues 216–238 (PGVDTGDRIRLSGEGEMGVDGGP).

This sequence belongs to the DnaJ family. In terms of assembly, homodimer. The cofactor is Zn(2+).

The protein localises to the cytoplasm. Participates actively in the response to hyperosmotic and heat shock by preventing the aggregation of stress-denatured proteins and by disaggregating proteins, also in an autonomous, DnaK-independent fashion. Unfolded proteins bind initially to DnaJ; upon interaction with the DnaJ-bound protein, DnaK hydrolyzes its bound ATP, resulting in the formation of a stable complex. GrpE releases ADP from DnaK; ATP binding to DnaK triggers the release of the substrate protein, thus completing the reaction cycle. Several rounds of ATP-dependent interactions between DnaJ, DnaK and GrpE are required for fully efficient folding. Also involved, together with DnaK and GrpE, in the DNA replication of plasmids through activation of initiation proteins. In Marinobacter nauticus (strain ATCC 700491 / DSM 11845 / VT8) (Marinobacter aquaeolei), this protein is Chaperone protein DnaJ.